The chain runs to 213 residues: High frequency lysogenization protein HflD homolog (213 aa).

A coiled-coil region spans residues 79–122; the sequence is QGLNAELTRYTLSLMVLERKLSSAKGALNTLGDRINGLQRQLDH.

The protein belongs to the HflD family.

It is found in the cytoplasm. It localises to the cell inner membrane. This is High frequency lysogenization protein HflD homolog from Salmonella typhi.